We begin with the raw amino-acid sequence, 367 residues long: DNA replication and repair protein RecF (367 aa).

30–37 (GENAQGKT) provides a ligand contact to ATP.

Belongs to the RecF family.

The protein localises to the cytoplasm. Its function is as follows. The RecF protein is involved in DNA metabolism; it is required for DNA replication and normal SOS inducibility. RecF binds preferentially to single-stranded, linear DNA. It also seems to bind ATP. This is DNA replication and repair protein RecF from Chlamydia abortus (strain DSM 27085 / S26/3) (Chlamydophila abortus).